Reading from the N-terminus, the 141-residue chain is Large ribosomal subunit protein uL22 (141 aa).

The disordered stretch occupies residues 108 to 141; the sequence is KSEEKKTVAKKTTTTKAPAKKTTSTKKATVKKES. Positions 117–134 are enriched in low complexity; the sequence is KKTTTTKAPAKKTTSTKK.

It belongs to the universal ribosomal protein uL22 family. In terms of assembly, part of the 50S ribosomal subunit.

Its function is as follows. This protein binds specifically to 23S rRNA; its binding is stimulated by other ribosomal proteins, e.g. L4, L17, and L20. It is important during the early stages of 50S assembly. It makes multiple contacts with different domains of the 23S rRNA in the assembled 50S subunit and ribosome. In terms of biological role, the globular domain of the protein is located near the polypeptide exit tunnel on the outside of the subunit, while an extended beta-hairpin is found that lines the wall of the exit tunnel in the center of the 70S ribosome. The chain is Large ribosomal subunit protein uL22 from Campylobacter jejuni subsp. jejuni serotype O:2 (strain ATCC 700819 / NCTC 11168).